The chain runs to 326 residues: DNA-directed RNA polymerase subunit alpha (326 aa).

The segment at 1–231 is alpha N-terminal domain (alpha-NTD); that stretch reads MQTALLKPKI…DQLSVFAALE (231 aa). Residues 247–326 are alpha C-terminal domain (alpha-CTD); that stretch reads IDPILLRPVD…ENWPPAGLEK (80 aa).

Belongs to the RNA polymerase alpha chain family. In terms of assembly, homodimer. The RNAP catalytic core consists of 2 alpha, 1 beta, 1 beta' and 1 omega subunit. When a sigma factor is associated with the core the holoenzyme is formed, which can initiate transcription.

It catalyses the reaction RNA(n) + a ribonucleoside 5'-triphosphate = RNA(n+1) + diphosphate. In terms of biological role, DNA-dependent RNA polymerase catalyzes the transcription of DNA into RNA using the four ribonucleoside triphosphates as substrates. This Cupriavidus metallidurans (strain ATCC 43123 / DSM 2839 / NBRC 102507 / CH34) (Ralstonia metallidurans) protein is DNA-directed RNA polymerase subunit alpha.